The following is a 73-amino-acid chain: Translation initiation factor IF-1 1 (73 aa).

The 72-residue stretch at 1–72 (MAKEELIEFG…TKGRINFRHK (72 aa)) folds into the S1-like domain.

The protein belongs to the IF-1 family. Component of the 30S ribosomal translation pre-initiation complex which assembles on the 30S ribosome in the order IF-2 and IF-3, IF-1 and N-formylmethionyl-tRNA(fMet); mRNA recruitment can occur at any time during PIC assembly.

The protein localises to the cytoplasm. Its function is as follows. One of the essential components for the initiation of protein synthesis. Stabilizes the binding of IF-2 and IF-3 on the 30S subunit to which N-formylmethionyl-tRNA(fMet) subsequently binds. Helps modulate mRNA selection, yielding the 30S pre-initiation complex (PIC). Upon addition of the 50S ribosomal subunit IF-1, IF-2 and IF-3 are released leaving the mature 70S translation initiation complex. This is Translation initiation factor IF-1 1 from Cupriavidus metallidurans (strain ATCC 43123 / DSM 2839 / NBRC 102507 / CH34) (Ralstonia metallidurans).